The primary structure comprises 358 residues: tRNA-specific 2-thiouridylase MnmA (358 aa).

ATP contacts are provided by residues 6–13 (ALSGGVDS) and M32. C103 serves as the catalytic Nucleophile. C103 and C201 are oxidised to a cystine. Position 127 (G127) interacts with ATP. The interaction with tRNA stretch occupies residues 151–153 (KDQ). Catalysis depends on C201, which acts as the Cysteine persulfide intermediate.

This sequence belongs to the MnmA/TRMU family.

Its subcellular location is the cytoplasm. It catalyses the reaction S-sulfanyl-L-cysteinyl-[protein] + uridine(34) in tRNA + AH2 + ATP = 2-thiouridine(34) in tRNA + L-cysteinyl-[protein] + A + AMP + diphosphate + H(+). In terms of biological role, catalyzes the 2-thiolation of uridine at the wobble position (U34) of tRNA, leading to the formation of s(2)U34. This chain is tRNA-specific 2-thiouridylase MnmA, found in Thermotoga maritima (strain ATCC 43589 / DSM 3109 / JCM 10099 / NBRC 100826 / MSB8).